The primary structure comprises 621 residues: DNA-directed RNA polymerase subunit gamma (621 aa).

The Mg(2+) site is built by aspartate 463, aspartate 465, and aspartate 467.

The protein belongs to the RNA polymerase beta' chain family. RpoC1 subfamily. As to quaternary structure, in cyanobacteria the RNAP catalytic core is composed of 2 alpha, 1 beta, 1 beta', 1 gamma and 1 omega subunit. When a sigma factor is associated with the core the holoenzyme is formed, which can initiate transcription. Mg(2+) serves as cofactor.

It carries out the reaction RNA(n) + a ribonucleoside 5'-triphosphate = RNA(n+1) + diphosphate. In terms of biological role, DNA-dependent RNA polymerase catalyzes the transcription of DNA into RNA using the four ribonucleoside triphosphates as substrates. The chain is DNA-directed RNA polymerase subunit gamma from Nostoc commune.